Here is an 89-residue protein sequence, read N- to C-terminus: Otospiralin (89 aa).

The first 21 residues, 1 to 21, serve as a signal peptide directing secretion; the sequence is MQACMVPGLALCLLLGPLAGA.

The protein belongs to the otospiralin family. Ear specific.

The protein localises to the secreted. Its function is as follows. May be essential for the survival of the neurosensory epithelium of the inner ear. The chain is Otospiralin (OTOS) from Homo sapiens (Human).